The sequence spans 934 residues: Translation initiation factor IF-2 (934 aa).

Residues 54 to 323 (AQESKPTTPP…KRQKRNEYEA (270 aa)) are disordered. Low complexity-rich tracts occupy residues 80–154 (PKPG…AGKP), 185–197 (RGGA…PRPG), 206–231 (GQAP…PGAA), and 238–250 (RPSP…TPSP). The segment covering 260–303 (GFGGGRGRGGRPGGPGGPGGPGGPGPRGGRGGRRGGTAGAFGRP) has biased composition (gly residues). Over residues 308 to 317 (RRGRKSKRQK) the composition is skewed to basic residues. Positions 430-602 (QRPPVVTVMG…VLLTADASLD (173 aa)) constitute a tr-type G domain. The G1 stretch occupies residues 439–446 (GHVDHGKT). 439–446 (GHVDHGKT) serves as a coordination point for GTP. A G2 region spans residues 464–468 (GITQH). A G3 region spans residues 489–492 (DTPG). GTP is bound by residues 489–493 (DTPGH) and 543–546 (NKID). Residues 543–546 (NKID) form a G4 region. The segment at 579–581 (SAK) is G5.

This sequence belongs to the TRAFAC class translation factor GTPase superfamily. Classic translation factor GTPase family. IF-2 subfamily.

It localises to the cytoplasm. One of the essential components for the initiation of protein synthesis. Protects formylmethionyl-tRNA from spontaneous hydrolysis and promotes its binding to the 30S ribosomal subunits. Also involved in the hydrolysis of GTP during the formation of the 70S ribosomal complex. This Corynebacterium urealyticum (strain ATCC 43042 / DSM 7109) protein is Translation initiation factor IF-2.